A 75-amino-acid chain; its full sequence is Phytosulfokines (75 aa).

Positions 1 to 22 (MSSKAITLLLIALLFSLSLAQA) are cleaved as a signal peptide. A propeptide spanning residues 23-66 (ARPLQPADSTKSVHVIPEKVHDEACEGVGEEECLMRRTLTAHVD) is cleaved from the precursor. Tyrosine 67 and tyrosine 69 each carry sulfotyrosine. The propeptide occupies 72-75 (DHNP).

This sequence belongs to the phytosulfokine family. Post-translationally, sulfation is important for activity and for the binding to a putative membrane receptor. Deletion of the sulfate groups of Tyr-67 and Tyr-69 resulted in compounds with respectively 0.6% and 4% of the activity. PSK-alpha is produced by endopeptidase digestion. PSK-beta is produced from PSK-alpha by exopeptidase digestion.

It localises to the secreted. Its function is as follows. Promotes plant cell differentiation, organogenesis and somatic embryogenesis as well as cell proliferation. The polypeptide is Phytosulfokines (PSK) (Asparagus officinalis (Garden asparagus)).